A 398-amino-acid polypeptide reads, in one-letter code: S-adenosylmethionine synthase (398 aa).

H17 lines the ATP pocket. D19 lines the Mg(2+) pocket. K(+) is bound at residue E45. L-methionine-binding residues include E58 and Q101. The interval 101–111 (QSPDIAQGVDK) is flexible loop. ATP contacts are provided by residues 176 to 178 (DGK), 243 to 244 (RF), D252, 258 to 259 (RK), and K279. Position 252 (D252) interacts with L-methionine. K283 is an L-methionine binding site.

It belongs to the AdoMet synthase family. As to quaternary structure, homotetramer; dimer of dimers. It depends on Mg(2+) as a cofactor. Requires K(+) as cofactor.

Its subcellular location is the cytoplasm. It carries out the reaction L-methionine + ATP + H2O = S-adenosyl-L-methionine + phosphate + diphosphate. It participates in amino-acid biosynthesis; S-adenosyl-L-methionine biosynthesis; S-adenosyl-L-methionine from L-methionine: step 1/1. In terms of biological role, catalyzes the formation of S-adenosylmethionine (AdoMet) from methionine and ATP. The overall synthetic reaction is composed of two sequential steps, AdoMet formation and the subsequent tripolyphosphate hydrolysis which occurs prior to release of AdoMet from the enzyme. In Staphylococcus aureus (strain Mu3 / ATCC 700698), this protein is S-adenosylmethionine synthase.